Reading from the N-terminus, the 1077-residue chain is ATP-dependent helicase/deoxyribonuclease subunit B (1077 aa).

It belongs to the helicase family. AddB/RexB type 2 subfamily. Heterodimer of AddA and RexB. The cofactor is Mg(2+).

The heterodimer acts as both an ATP-dependent DNA helicase and an ATP-dependent, dual-direction single-stranded exonuclease. Recognizes the chi site generating a DNA molecule suitable for the initiation of homologous recombination. This subunit has 5' -&gt; 3' nuclease activity but not helicase activity. The sequence is that of ATP-dependent helicase/deoxyribonuclease subunit B from Streptococcus agalactiae serotype III (strain NEM316).